The primary structure comprises 1343 residues: MVYSYSEKKRIRKDFGKRQKVLDIPYLLSIQLDSFKKFTDQDPTGERGFEAAFRSVFPIKSFSGNSELQYVSYKLGEPVFDVKECQIRGITYSAPLRVKLRMVLYDREAAPGTVKDIKEQEVYMGDIPLMTDNGTFVINGTERVIVSQLHRSPGVFFDHDRGKTHSSGKVLYNARIIPYRGSWLDFEFDPKDALFVRIDRRRKLAASIILRALDYSTQDILDLFFDRVNFKIKQDSLVMDLVADRLRGETASYDIKDAEGTVLVEKGRRITARHIRQLEKTNTTELEVPVEYIAGKISGQDYIDPDTGEVLVSANAEIGLEDLAKLSLAGIKEVSTLYINELDNGAYISDTLRIDSTTNRLEALVEIYRMMRPGEPPTKDAAEALFNNLFFSEERYDLSKVGRMKFNRRLSIDDDEGTGILSKEDIVAVMKNIIAIRNGLDEVDDIDHLGNRRIRSVGEMAENQFRVGLVRVERAVRERLSLGDLNELMPQDLINAKPISAAVKEFFGSSQLSQFMDQNNPLSEVTHKRRISALGPGGLTRERAGFEVRDVHPTHYGRLCPIETPEGPNIGLINSLSTFARTNNYGFLETPYRKVIDGVVTDEVDYLSAIEEGRYVIAQAIVELDENNRMMDELIACRHKGDSTFMGAADIQYMDVSPQQIISVAASLIPFLEHDDANRALMGANMQRQAVPTLKADKPLVGTGIERTLAVDSGVVVAAKRGGYVDYVDASRIVVKVDEAELTPGEAGIDIYNLTKYTRSNQNTCINQRPCCSVGDPVVRGDVLADGPSTDLGDLALGQNMRIAFMPWNGYNFEDSILISERVAQEDRFTTIHIQELSCIARDTKLGSEEITADIPNVGESALSKLDESGIVYIGAEVKGGDILVGKVTPKGETQLTPEEKLLRAIFGEKASDVKDSSLRVPNSVKGTIIDVQVFTRDGVDKDKRAVEIEEMHIAQAKKDLTEEFQILEDGVLGRARNLLLGAGFDEAQLDAIPRSQLLMQTIDDEAKQTELEQLAEQAEELKADFDKKFEVKRRKITQGDDLAPGVLKIVKVYLAVKRTIQPGDKMAGRHGNKGVISKICPVEDMPYDEKGNPVDIVLNPLGVPSRMNIGQVLEVHMGAAAKGIGNRITEMLEEQRELAELRGYIKEVYELGDEVQQRVDIDSFTDDEVLRLAKNLKGGVPTATPAFDGAKEKEIKQMLALAGLPTSGQLTLCDGRTGNEFERQVTVGYMYMLKLNHLVDDKMHARSTGSYSLVTQQPLGGKAQFGGQRFGEMEVWALEAYGAAYTLQEMLTVKSDDVNGRTQMYKNIVDGNHQMQPGMPESFNVLLKEIRSLGINIELDQK.

This sequence belongs to the RNA polymerase beta chain family. As to quaternary structure, the RNAP catalytic core consists of 2 alpha, 1 beta, 1 beta' and 1 omega subunit. When a sigma factor is associated with the core the holoenzyme is formed, which can initiate transcription.

It carries out the reaction RNA(n) + a ribonucleoside 5'-triphosphate = RNA(n+1) + diphosphate. Functionally, DNA-dependent RNA polymerase catalyzes the transcription of DNA into RNA using the four ribonucleoside triphosphates as substrates. This Shewanella piezotolerans (strain WP3 / JCM 13877) protein is DNA-directed RNA polymerase subunit beta.